Reading from the N-terminus, the 95-residue chain is Large ribosomal subunit protein uL23 (95 aa).

This sequence belongs to the universal ribosomal protein uL23 family. Part of the 50S ribosomal subunit. Contacts protein L29, and trigger factor when it is bound to the ribosome.

Functionally, one of the early assembly proteins it binds 23S rRNA. One of the proteins that surrounds the polypeptide exit tunnel on the outside of the ribosome. Forms the main docking site for trigger factor binding to the ribosome. This is Large ribosomal subunit protein uL23 from Fusobacterium nucleatum subsp. nucleatum (strain ATCC 25586 / DSM 15643 / BCRC 10681 / CIP 101130 / JCM 8532 / KCTC 2640 / LMG 13131 / VPI 4355).